Consider the following 74-residue polypeptide: Putative defensin-like protein 186 (74 aa).

A signal peptide spans 1 to 22; it reads MKNSSIILVLVFFFFISSSGEA. 4 cysteine pairs are disulfide-bonded: C25-C74, C31-C51, C37-C68, and C41-C70.

This sequence belongs to the DEFL family.

It localises to the secreted. The polypeptide is Putative defensin-like protein 186 (LCR40) (Arabidopsis thaliana (Mouse-ear cress)).